A 223-amino-acid polypeptide reads, in one-letter code: Sigma non-opioid intracellular receptor 1 (223 aa).

Residues 1 to 9 (MQWAVGRRW) lie on the Lumenal side of the membrane. Residues 2–8 (QWAVGRR) form a targeting to endoplasmic reticulum-associated lipid droplets region. The chain crosses the membrane as a helical span at residues 10–30 (LWVALFLAAVAVLTQIVWLWL). Residues 31 to 223 (GTQNFVFQRE…LTTYLFGQDP (193 aa)) are Cytoplasmic-facing. The tract at residues 99–106 (SLSEYVLL) is important for ligand-binding. The C-terminal hydrophobic region stretch occupies residues 177–223 (VIPSTLGFALADTVFSTQDFLTLFYTLRVYARALQLELTTYLFGQDP).

Belongs to the ERG2 family. Homotrimer. Forms a ternary complex with ANK2 and ITPR3. The complex is disrupted by agonists. Interacts with KCNA4. Interacts with KCNA2; cocaine consumption leads to increased interaction. Interacts with RNF112 in an oxidative stress-regulated manner. Ubiquitously expressed with higher expression in liver, kidney and steroid-producing tissues such as placenta, ovary and adrenal gland.

Its subcellular location is the nucleus inner membrane. The protein localises to the nucleus outer membrane. It is found in the nucleus envelope. It localises to the cytoplasmic vesicle. The protein resides in the endoplasmic reticulum membrane. Its subcellular location is the membrane. The protein localises to the lipid droplet. It is found in the cell junction. It localises to the cell membrane. The protein resides in the cell projection. Its subcellular location is the growth cone. The protein localises to the postsynaptic density membrane. In terms of biological role, functions in lipid transport from the endoplasmic reticulum and is involved in a wide array of cellular functions probably through regulation of the biogenesis of lipid microdomains at the plasma membrane. Involved in the regulation of different receptors it plays a role in BDNF signaling and EGF signaling. Also regulates ion channels like the potassium channel and could modulate neurotransmitter release. Plays a role in calcium signaling through modulation together with ANK2 of the ITP3R-dependent calcium efflux at the endoplasmic reticulum. Plays a role in several other cell functions including proliferation, survival and death. Originally identified for its ability to bind various psychoactive drugs it is involved in learning processes, memory and mood alteration. Necessary for proper mitochondrial axonal transport in motor neurons, in particular the retrograde movement of mitochondria. Plays a role in protecting cells against oxidative stress-induced cell death via its interaction with RNF112. This is Sigma non-opioid intracellular receptor 1 (SIGMAR1) from Cavia porcellus (Guinea pig).